A 284-amino-acid polypeptide reads, in one-letter code: Tropomyosin Por p 1.0101 (284 aa).

Met-1 is modified (N-acetylmethionine). Residues 1–21 (MDAIKKKMQAMKLEKDDAMDR) form a disordered region. The stretch at 1-280 (MDAIKKKMQA…TDELDQAFSE (280 aa)) forms a coiled coil. Residues 12–21 (KLEKDDAMDR) are compositionally biased toward basic and acidic residues.

The protein belongs to the tropomyosin family. In terms of assembly, homodimer. As to expression, expressed in muscle (at protein level). Expressed in pincer muscles.

Its function is as follows. Tropomyosin, in association with the troponin complex, plays a central role in the calcium dependent regulation of muscle contraction. The polypeptide is Tropomyosin Por p 1.0101 (Portunus pelagicus (Blue swimmer crab)).